The chain runs to 265 residues: Orotidine 5'-phosphate decarboxylase (265 aa).

Residues D38, 60-62 (KTH), 91-100 (DRKFADIGNT), Y213, and R232 contribute to the substrate site. Catalysis depends on K93, which acts as the Proton donor.

It belongs to the OMP decarboxylase family.

It catalyses the reaction orotidine 5'-phosphate + H(+) = UMP + CO2. It participates in pyrimidine metabolism; UMP biosynthesis via de novo pathway; UMP from orotate: step 2/2. The sequence is that of Orotidine 5'-phosphate decarboxylase (pyrG) from Mucor circinelloides f. lusitanicus (Mucor racemosus var. lusitanicus).